We begin with the raw amino-acid sequence, 232 residues long: MPSQQKKIIFCMAGVFSFACALGVVTALGTPLWIKATVLCKTGALLVNASGQELDKFMGEMQYGLFHGEGVRQCGLGARPFRFSFFPDLLKAIPVSIHVNIILFSMILVVLTMVGTAFFMYNAFGKPFESLHGPLGLYLVSFISGSCGCLVMILFASEVKIHRLSEKIANFKEGTYAYKTQNENYTTSFWVVFICFFVHFLNGLLIRLAGFQFPFTKSKETETTNVASDLMY.

Residues 8–28 traverse the membrane as a helical segment; it reads IIFCMAGVFSFACALGVVTAL. N-linked (GlcNAc...) asparagine glycosylation occurs at asparagine 48. A run of 2 helical transmembrane segments spans residues 101–121 and 135–155; these read IILFSMILVVLTMVGTAFFMY and LGLYLVSFISGSCGCLVMILF. Asparagine 184 carries an N-linked (GlcNAc...) asparagine glycan. A helical transmembrane segment spans residues 186-206; that stretch reads TTSFWVVFICFFVHFLNGLLI.

The protein belongs to the clarin family.

It is found in the cell membrane. Functionally, may have a role in the excitatory ribbon synapse junctions between hair cells and cochlear ganglion cells and presumably also in analogous synapses within the retina. In Rattus norvegicus (Rat), this protein is Clarin-1 (Clrn1).